A 153-amino-acid chain; its full sequence is UPF0178 protein Atu1478 (153 aa).

Belongs to the UPF0178 family.

This chain is UPF0178 protein Atu1478, found in Agrobacterium fabrum (strain C58 / ATCC 33970) (Agrobacterium tumefaciens (strain C58)).